Consider the following 727-residue polypeptide: Transcription activator of gluconeogenesis TRV_01442 (727 aa).

The span at 1 to 32 (MSPHQTTGQESDNMTVNGENAQASSQYIQSNE) shows a compositional bias: polar residues. Positions 1–62 (MSPHQTTGQE…PSRPKRKKAK (62 aa)) are disordered. Residues 39–55 (ATEKKASAAKAAKDPSR) show a composition bias toward basic and acidic residues. The zn(2)-C6 fungal-type DNA-binding region spans 65–93 (CYACQRGHLTCGDERPCQRCIKRGFQDAC). Composition is skewed to polar residues over residues 129–213 (NNVN…TPSA), 267–277 (PSDSGAQRGSI), and 361–379 (MMTT…GAFN). Disordered regions lie at residues 129–224 (NNVN…FNST), 264–297 (DTPP…ESPS), 353–399 (SPAS…STPQ), 533–567 (NHNV…YNSS), and 627–666 (GSNG…QRRW). Composition is skewed to low complexity over residues 380 to 399 (SRQN…STPQ) and 543 to 553 (GLMTGSTSRGS). Positions 639–661 (EATSNETNELNGSHTNGATTNGR) are enriched in polar residues.

It belongs to the ERT1/acuK family.

It is found in the nucleus. Its function is as follows. Transcription factor which regulates nonfermentable carbon utilization. Activator of gluconeogenetic genes. The sequence is that of Transcription activator of gluconeogenesis TRV_01442 from Trichophyton verrucosum (strain HKI 0517).